We begin with the raw amino-acid sequence, 507 residues long: Maturase K (507 aa).

This sequence belongs to the intron maturase 2 family. MatK subfamily.

The protein resides in the plastid. Its subcellular location is the chloroplast. Functionally, usually encoded in the trnK tRNA gene intron. Probably assists in splicing its own and other chloroplast group II introns. The polypeptide is Maturase K (Lyonia lucida (Fetterbush)).